The following is a 183-amino-acid chain: Microfibrillar-associated protein 2 (183 aa).

A signal peptide spans 1 to 17 (MRAASLFLLFLPAGLLA). The residue at position 18 (Gln-18) is a Pyrrolidone carboxylic acid. Residue Gln-20 forms an Isoglutamyl lysine isopeptide (Gln-Lys) (interchain with K-?) linkage. Tyr-47, Tyr-48, and Tyr-50 each carry sulfotyrosine. In terms of domain architecture, ShKT spans 153–183 (CRDKFSKCGVLASSGLCQSVAAACARSCGGC). 3 cysteine pairs are disulfide-bonded: Cys-153/Cys-183, Cys-160/Cys-176, and Cys-169/Cys-180.

It belongs to the MFAP family. As to quaternary structure, forms a ternary complex with BGN and ELN. Interacts with FBN1 (via N-terminal domain) and FBN2. In terms of processing, O-glycosylated; glycans consist of Gal(beta1-3)GalNAc. Forms intermolecular disulfide bonds either with other MAGP-1 molecules or with other components of the microfibrils. Post-translationally, forms transglutaminase cross-links with tropoelastin.

It localises to the secreted. It is found in the extracellular space. Its subcellular location is the extracellular matrix. Functionally, component of the elastin-associated microfibrils. This Bos taurus (Bovine) protein is Microfibrillar-associated protein 2 (MFAP2).